The following is a 320-amino-acid chain: MIKKIGVLTSGGDSPGMNAAIRGVVRAGLSEGIEVYGIYDGYLGLFQNRMMLLSYCSVSDIINKGGTVLGSSRFPELKKDMIRSVVMNNISKSHLDALVIIGGDGSYIGARRLSDLGCPCIGIPGTIDNDVAGTDYTIGYFTALETIIEAIDRLRDTSSSHQRISIVEVMGRYCGDLTISAAIAGGCEFVIIPELKFQMQDLVDKIKLNISKGKKHAIVAITERICNVFDLAQYIENETGKETRATVLGHIQRGGKPVAYDRILASRMGAYSIELLLKGYGRHCIGIENEKLVHHDINDATKYMRRSFRQDLLTTAKKLC.

Residue Gly12 coordinates ATP. ADP is bound at residue 22 to 26 (RGVVR). ATP-binding positions include 73 to 74 (RF) and 103 to 106 (GDGS). Residue Asp104 participates in Mg(2+) binding. Residue 126–128 (TID) coordinates substrate. Residue Asp128 is the Proton acceptor of the active site. Arg155 is an ADP binding site. Substrate contacts are provided by residues Arg163 and 170–172 (MGR). Residues 186–188 (GCE), Lys212, and 214–216 (KKH) each bind ADP. Residues Glu223, Arg244, and 250-253 (HIQR) contribute to the substrate site.

It belongs to the phosphofructokinase type A (PFKA) family. ATP-dependent PFK group I subfamily. Prokaryotic clade 'B1' sub-subfamily. Homotetramer. The cofactor is Mg(2+).

The protein resides in the cytoplasm. It catalyses the reaction beta-D-fructose 6-phosphate + ATP = beta-D-fructose 1,6-bisphosphate + ADP + H(+). It participates in carbohydrate degradation; glycolysis; D-glyceraldehyde 3-phosphate and glycerone phosphate from D-glucose: step 3/4. Its activity is regulated as follows. Allosterically activated by ADP and other diphosphonucleosides, and allosterically inhibited by phosphoenolpyruvate. Its function is as follows. Catalyzes the phosphorylation of D-fructose 6-phosphate to fructose 1,6-bisphosphate by ATP, the first committing step of glycolysis. This Blochmanniella floridana protein is ATP-dependent 6-phosphofructokinase.